The sequence spans 516 residues: Anaerobic nitric oxide reductase transcription regulator NorR (516 aa).

A 4-aspartylphosphate modification is found at D57. The Sigma-54 factor interaction domain maps to 187–416 (IIGLSAPMLQ…LEHAIHRAVV (230 aa)). ATP contacts are provided by residues 215–222 (GETGTGKE) and 278–287 (ADNGTLFLDE). Residues 482–501 (WAATARALELDVANLHRLAK) constitute a DNA-binding region (H-T-H motif).

The protein operates within nitrogen metabolism; nitric oxide reduction. Its function is as follows. Required for the expression of anaerobic nitric oxide (NO) reductase, acts as a transcriptional activator for at least the norVW operon. Activation also requires sigma-54. This Klebsiella pneumoniae (strain 342) protein is Anaerobic nitric oxide reductase transcription regulator NorR.